A 209-amino-acid polypeptide reads, in one-letter code: Redox-sensing transcriptional repressor Rex (209 aa).

The segment at residues 16–55 (LYYRFIQNLSLSGKQRVSSAELSEAVKVDSATIRRDFSYF) is a DNA-binding region (H-T-H motif). Residue 90–95 (GVGNLG) coordinates NAD(+).

It belongs to the transcriptional regulatory Rex family. Homodimer.

The protein localises to the cytoplasm. Functionally, modulates transcription in response to changes in cellular NADH/NAD(+) redox state. In Bacillus cereus (strain AH187), this protein is Redox-sensing transcriptional repressor Rex.